Consider the following 570-residue polypeptide: Putative ABC transporter ATP-binding protein MW2603 (570 aa).

ABC transporter domains lie at 6 to 247 (ISFK…GIRE) and 304 to 537 (LELN…ASLR). Residues 40 to 47 (GASGSGKS) and 338 to 345 (GHNGAGKS) contribute to the ATP site.

This sequence belongs to the ABC transporter superfamily.

It is found in the cell membrane. Its function is as follows. Probably part of an ABC transporter complex. Responsible for energy coupling to the transport system. The sequence is that of Putative ABC transporter ATP-binding protein MW2603 from Staphylococcus aureus (strain MW2).